We begin with the raw amino-acid sequence, 133 residues long: Holo-[acyl-carrier-protein] synthase (133 aa).

Mg(2+)-binding residues include Asp-8 and Glu-57.

The protein belongs to the P-Pant transferase superfamily. AcpS family. Requires Mg(2+) as cofactor.

It is found in the cytoplasm. The catalysed reaction is apo-[ACP] + CoA = holo-[ACP] + adenosine 3',5'-bisphosphate + H(+). Functionally, transfers the 4'-phosphopantetheine moiety from coenzyme A to a Ser of acyl-carrier-protein. This chain is Holo-[acyl-carrier-protein] synthase, found in Bartonella henselae (strain ATCC 49882 / DSM 28221 / CCUG 30454 / Houston 1) (Rochalimaea henselae).